The chain runs to 181 residues: Large ribosomal subunit protein uL16 (181 aa).

It belongs to the universal ribosomal protein uL16 family. In terms of assembly, part of the 50S ribosomal subunit.

The chain is Large ribosomal subunit protein uL16 from Pyrococcus furiosus (strain ATCC 43587 / DSM 3638 / JCM 8422 / Vc1).